Here is a 76-residue protein sequence, read N- to C-terminus: Exodeoxyribonuclease 7 small subunit (76 aa).

The protein belongs to the XseB family. In terms of assembly, heterooligomer composed of large and small subunits.

The protein localises to the cytoplasm. It catalyses the reaction Exonucleolytic cleavage in either 5'- to 3'- or 3'- to 5'-direction to yield nucleoside 5'-phosphates.. Functionally, bidirectionally degrades single-stranded DNA into large acid-insoluble oligonucleotides, which are then degraded further into small acid-soluble oligonucleotides. In Geotalea uraniireducens (strain Rf4) (Geobacter uraniireducens), this protein is Exodeoxyribonuclease 7 small subunit.